Consider the following 968-residue polypeptide: Glycine dehydrogenase (decarboxylating) (968 aa).

K712 bears the N6-(pyridoxal phosphate)lysine mark.

The protein belongs to the GcvP family. The glycine cleavage system is composed of four proteins: P, T, L and H. Pyridoxal 5'-phosphate is required as a cofactor.

The catalysed reaction is N(6)-[(R)-lipoyl]-L-lysyl-[glycine-cleavage complex H protein] + glycine + H(+) = N(6)-[(R)-S(8)-aminomethyldihydrolipoyl]-L-lysyl-[glycine-cleavage complex H protein] + CO2. In terms of biological role, the glycine cleavage system catalyzes the degradation of glycine. The P protein binds the alpha-amino group of glycine through its pyridoxal phosphate cofactor; CO(2) is released and the remaining methylamine moiety is then transferred to the lipoamide cofactor of the H protein. This is Glycine dehydrogenase (decarboxylating) from Prochlorococcus marinus (strain NATL1A).